A 59-amino-acid polypeptide reads, in one-letter code: uncharacterized protein (59 aa).

Composition is skewed to basic and acidic residues over residues 1-23 (MAEHRGGSGNFAEDREKASDAGR) and 36-45 (DPQRASEAGK). Residues 1 to 59 (MAEHRGGSGNFAEDREKASDAGRKGGQHSGGNFKNDPQRASEAGKKGGQQSGGNKSGKS) are disordered. Residues 46–59 (KGGQQSGGNKSGKS) are compositionally biased toward gly residues.

The protein belongs to the con-10 family.

This is an uncharacterized protein from Escherichia coli (strain K12).